Reading from the N-terminus, the 267-residue chain is Tryptophan synthase alpha chain (267 aa).

Residues glutamate 47 and aspartate 58 each act as proton acceptor in the active site.

This sequence belongs to the TrpA family. As to quaternary structure, tetramer of two alpha and two beta chains.

It catalyses the reaction (1S,2R)-1-C-(indol-3-yl)glycerol 3-phosphate + L-serine = D-glyceraldehyde 3-phosphate + L-tryptophan + H2O. Its pathway is amino-acid biosynthesis; L-tryptophan biosynthesis; L-tryptophan from chorismate: step 5/5. Its function is as follows. The alpha subunit is responsible for the aldol cleavage of indoleglycerol phosphate to indole and glyceraldehyde 3-phosphate. The chain is Tryptophan synthase alpha chain from Chlorobaculum parvum (strain DSM 263 / NCIMB 8327) (Chlorobium vibrioforme subsp. thiosulfatophilum).